The chain runs to 111 residues: UPF0125 protein SO_1475 (111 aa).

A disordered region spans residues 88–111 (VRRRRADKAKDEGRANKVTGGRVS).

Belongs to the UPF0125 (RnfH) family.

The protein is UPF0125 protein SO_1475 of Shewanella oneidensis (strain ATCC 700550 / JCM 31522 / CIP 106686 / LMG 19005 / NCIMB 14063 / MR-1).